A 49-amino-acid polypeptide reads, in one-letter code: Large ribosomal subunit protein bL33A (49 aa).

It belongs to the bacterial ribosomal protein bL33 family.

This is Large ribosomal subunit protein bL33A from Staphylococcus saprophyticus subsp. saprophyticus (strain ATCC 15305 / DSM 20229 / NCIMB 8711 / NCTC 7292 / S-41).